A 414-amino-acid chain; its full sequence is MTQANLSETLFKPRFKHPETSTLVRRFNHGAQPPVQSALDGKTIPHWYRMINRLMWIWRGIDPREILDVQARIVMSDAERTDDDLYDTVIGYRGGNWIYEWAIQAMVWQQKACAEEDPQLSGRHWLHAATLYNIAAYPHLKGDDLAEQAQALSNRAYEEAAQRLPGTMRQMEFTVPGGAPITGFLHMPKGDGPFPTVLMCGGLDAMQTDYYSLYERYFAPRGIAMLTIDMPSVGFSSKWKLTQDSSLLHQHVLKALPNVPWVDHTRVAAFGFRFGANVAVRLAYLESPRLKAVACLGPVVHTLLSDFKCQQQVPEMYLDVLASRLGMHDASDEALRVELNRYSLKVQGLLGRRCPTPMLSGYWKNDPFSPEEDSRLITSSSADGKLLEIPFNPVYRNFDKGLQEITGWIEKRLC.

Belongs to the FrsA family.

It carries out the reaction a carboxylic ester + H2O = an alcohol + a carboxylate + H(+). In terms of biological role, catalyzes the hydrolysis of esters. The sequence is that of Esterase FrsA from Shigella sonnei (strain Ss046).